The primary structure comprises 650 residues: 1-deoxy-D-xylulose-5-phosphate synthase (650 aa).

Residues His-87 and 128–130 (GHS) contribute to the thiamine diphosphate site. Position 159 (Asp-159) interacts with Mg(2+). Thiamine diphosphate is bound by residues 160–161 (GS), Asn-188, Tyr-299, and Glu-383. Residue Asn-188 coordinates Mg(2+).

This sequence belongs to the transketolase family. DXPS subfamily. As to quaternary structure, homodimer. Mg(2+) is required as a cofactor. Thiamine diphosphate serves as cofactor.

The enzyme catalyses D-glyceraldehyde 3-phosphate + pyruvate + H(+) = 1-deoxy-D-xylulose 5-phosphate + CO2. It functions in the pathway metabolic intermediate biosynthesis; 1-deoxy-D-xylulose 5-phosphate biosynthesis; 1-deoxy-D-xylulose 5-phosphate from D-glyceraldehyde 3-phosphate and pyruvate: step 1/1. Catalyzes the acyloin condensation reaction between C atoms 2 and 3 of pyruvate and glyceraldehyde 3-phosphate to yield 1-deoxy-D-xylulose-5-phosphate (DXP). The polypeptide is 1-deoxy-D-xylulose-5-phosphate synthase (Syntrophus aciditrophicus (strain SB)).